We begin with the raw amino-acid sequence, 190 residues long: Peptidyl-tRNA hydrolase (190 aa).

Tyr14 is a tRNA binding site. His19 (proton acceptor) is an active-site residue. TRNA-binding residues include Tyr64, Asn66, and Asn112.

It belongs to the PTH family. Monomer.

It localises to the cytoplasm. The catalysed reaction is an N-acyl-L-alpha-aminoacyl-tRNA + H2O = an N-acyl-L-amino acid + a tRNA + H(+). Its function is as follows. Hydrolyzes ribosome-free peptidyl-tRNAs (with 1 or more amino acids incorporated), which drop off the ribosome during protein synthesis, or as a result of ribosome stalling. Catalyzes the release of premature peptidyl moieties from peptidyl-tRNA molecules trapped in stalled 50S ribosomal subunits, and thus maintains levels of free tRNAs and 50S ribosomes. In Chlorobium limicola (strain DSM 245 / NBRC 103803 / 6330), this protein is Peptidyl-tRNA hydrolase.